A 23-amino-acid polypeptide reads, in one-letter code: Basic phospholipase A2 homolog (23 aa).

Contains 7 disulfide bonds. In terms of tissue distribution, expressed by the venom gland.

The protein resides in the secreted. The sequence is that of Basic phospholipase A2 homolog from Trimeresurus stejnegeri (Chinese green tree viper).